A 594-amino-acid polypeptide reads, in one-letter code: Glutamate decarboxylase 1 (594 aa).

Over residues 1–13 (MASSTPSSSATSS) the composition is skewed to low complexity. Residues 1–23 (MASSTPSSSATSSNAGADPNTTN) are disordered. Ser78 is modified (phosphoserine). Residue 190–192 (QLS) participates in 4-aminobutanoate binding. Lys405 bears the N6-(pyridoxal phosphate)lysine mark. Arg567 is a binding site for 4-aminobutanoate.

The protein belongs to the group II decarboxylase family. As to quaternary structure, homodimer. It depends on pyridoxal 5'-phosphate as a cofactor.

It catalyses the reaction L-glutamate + H(+) = 4-aminobutanoate + CO2. Functionally, catalyzes the synthesis of the inhibitory neurotransmitter gamma-aminobutyric acid (GABA) with pyridoxal 5'-phosphate as cofactor. This chain is Glutamate decarboxylase 1 (GAD1), found in Pan troglodytes (Chimpanzee).